We begin with the raw amino-acid sequence, 226 residues long: Enolase-phosphatase E1 (226 aa).

Belongs to the HAD-like hydrolase superfamily. MasA/MtnC family. As to quaternary structure, monomer. Mg(2+) serves as cofactor.

The enzyme catalyses 5-methylsulfanyl-2,3-dioxopentyl phosphate + H2O = 1,2-dihydroxy-5-(methylsulfanyl)pent-1-en-3-one + phosphate. Its pathway is amino-acid biosynthesis; L-methionine biosynthesis via salvage pathway; L-methionine from S-methyl-5-thio-alpha-D-ribose 1-phosphate: step 3/6. It functions in the pathway amino-acid biosynthesis; L-methionine biosynthesis via salvage pathway; L-methionine from S-methyl-5-thio-alpha-D-ribose 1-phosphate: step 4/6. Its function is as follows. Bifunctional enzyme that catalyzes the enolization of 2,3-diketo-5-methylthiopentyl-1-phosphate (DK-MTP-1-P) into the intermediate 2-hydroxy-3-keto-5-methylthiopentenyl-1-phosphate (HK-MTPenyl-1-P), which is then dephosphorylated to form the acireductone 1,2-dihydroxy-3-keto-5-methylthiopentene (DHK-MTPene). This Shewanella pealeana (strain ATCC 700345 / ANG-SQ1) protein is Enolase-phosphatase E1.